The chain runs to 502 residues: MKIRAEEISEIIKKQIREYGKEVEVSETGTIISIGDGIARIHGLSGAMAGELLEFPGGVSGMVLNLEEDNVGAAVLGEFTAIKEGHTVKRTGRIAEVPVGEALIGRVVNAIGEPIDGKGPIKTDTFSKVEIKAPGIVARKSVDQPMASGLKAVDAMVPIGRGQRELIIGDRQTGKTAVAVDTIINQKGGDVICIYVAIGQKRSTVAQVVAKLSDHGAMDYTIVVAASASESAPLQFIAPYSGVTMGEYFRDKGQHALIIYDDLSKQAVAYRQLSLLLRRPPGREAYPGDVFYLHSRLLERACKLSDECGGGSLTALPIIETQAGDVSAYIPTNVISITDGQIYLESDLFFSGVRPAINVGLSVSRVGGKAQTKSMKQVAGTLRLNLAQYREMAAFAQFGSDLDKATQMQLARGERLVEILKQPQYRPLSNEKQVLIIFAANNGFLDELPVSTLRRYEDEMYAFFDNRQADLLSELRDKKAIDDELKKRIVAALEQFKKEFSA.

169 to 176 contributes to the ATP binding site; it reads GDRQTGKT.

Belongs to the ATPase alpha/beta chains family. F-type ATPases have 2 components, CF(1) - the catalytic core - and CF(0) - the membrane proton channel. CF(1) has five subunits: alpha(3), beta(3), gamma(1), delta(1), epsilon(1). CF(0) has three main subunits: a(1), b(2) and c(9-12). The alpha and beta chains form an alternating ring which encloses part of the gamma chain. CF(1) is attached to CF(0) by a central stalk formed by the gamma and epsilon chains, while a peripheral stalk is formed by the delta and b chains.

Its subcellular location is the cell inner membrane. The enzyme catalyses ATP + H2O + 4 H(+)(in) = ADP + phosphate + 5 H(+)(out). In terms of biological role, produces ATP from ADP in the presence of a proton gradient across the membrane. The alpha chain is a regulatory subunit. The chain is ATP synthase subunit alpha from Pelobacter propionicus (strain DSM 2379 / NBRC 103807 / OttBd1).